The primary structure comprises 588 residues: Transport ATP-binding protein AarD (588 aa).

The ABC transmembrane type-1 domain maps to 24-316 (LRISMLLGVV…LGTYYHAKAQ (293 aa)). 6 helical membrane passes run 29–49 (LLGVVSGLLIIAQAWFLAVIL), 62–82 (LLTPFILLLAVFVLRALLTVI), 149–169 (IIPIMILIAIFPFNWAAALIL), 170–190 (FATAPLIPIFMALVGLGAADA), 250–270 (SGVLEFFASISIAIVAVYFGF), and 276–296 (LNFGSYGLPVTMFAGFLALIL). The region spanning 350–583 (IEANKLEIYS…EGPFARLLAH (234 aa)) is the ABC transporter domain. 383–390 (GQSGAGKS) serves as a coordination point for ATP.

The protein belongs to the ABC transporter superfamily.

The protein localises to the cell inner membrane. In terms of biological role, somehow involved in the cytochrome D branch of aerobic respiration. Seems to be a component of a transport system. This is Transport ATP-binding protein AarD (aarD) from Providencia stuartii.